The chain runs to 239 residues: Phosphoribosylaminoimidazole-succinocarboxamide synthase (239 aa).

It belongs to the SAICAR synthetase family.

It catalyses the reaction 5-amino-1-(5-phospho-D-ribosyl)imidazole-4-carboxylate + L-aspartate + ATP = (2S)-2-[5-amino-1-(5-phospho-beta-D-ribosyl)imidazole-4-carboxamido]succinate + ADP + phosphate + 2 H(+). It participates in purine metabolism; IMP biosynthesis via de novo pathway; 5-amino-1-(5-phospho-D-ribosyl)imidazole-4-carboxamide from 5-amino-1-(5-phospho-D-ribosyl)imidazole-4-carboxylate: step 1/2. The polypeptide is Phosphoribosylaminoimidazole-succinocarboxamide synthase (Nitratiruptor sp. (strain SB155-2)).